The primary structure comprises 184 residues: Phosphopantetheine adenylyltransferase (184 aa).

Substrate is bound at residue serine 8. Residues 8-9 and histidine 16 contribute to the ATP site; that span reads SF. Residues lysine 40, leucine 74, and arginine 88 each contribute to the substrate site. ATP is bound by residues 89–91, glutamate 99, and 123–129; these read GLR and WSFVSST.

Belongs to the bacterial CoaD family. In terms of assembly, homohexamer. Requires Mg(2+) as cofactor.

It localises to the cytoplasm. The catalysed reaction is (R)-4'-phosphopantetheine + ATP + H(+) = 3'-dephospho-CoA + diphosphate. The protein operates within cofactor biosynthesis; coenzyme A biosynthesis; CoA from (R)-pantothenate: step 4/5. Its function is as follows. Reversibly transfers an adenylyl group from ATP to 4'-phosphopantetheine, yielding dephospho-CoA (dPCoA) and pyrophosphate. The sequence is that of Phosphopantetheine adenylyltransferase from Deinococcus geothermalis (strain DSM 11300 / CIP 105573 / AG-3a).